The following is a 250-amino-acid chain: Testis-expressed protein 101 (250 aa).

Positions 1–25 (MGACRIQYVLLIFLLIASRWTLVQN) are cleaved as a signal peptide. N-linked (GlcNAc...) asparagine glycosylation is found at Asn-45, Asn-110, Asn-134, and Asn-160. The UPAR/Ly6 domain maps to 141 to 215 (CPTCVALGSC…VKETCSYQSF (75 aa)). The GPI-anchor amidated glycine moiety is linked to residue Gly-224. Positions 225-250 (ASQMPTSLWVLELLFPLLLLPLTHFP) are cleaved as a propeptide — removed in mature form.

As to quaternary structure, interacts with VAMP3. Interacts with LY6K. Interacts with DPEP3; co-localized on the cell surface of spermatocytes, spermatids, and testicular spermatozoa, co-localized only in cytoplasmic droplets of caput and corpus epididymal sperm. Interacts with ADAM3; co-localized on sperm surface. Interacts with ADAM5. Post-translationally, N-glycosylated; by high mannose and/or biantennary complex and/or certain types of hybrid oligosaccharides; possesses different oligosaccharides chains according to its subcellular localization in the testis. In terms of processing, sheds from membrane raft by ACE and released from the cell surface of epididymal sperm while it passes through the caput epididymis leading to disappearance of TEX101 on spermatozoa; is essential to produce fertile spermatozoa. In terms of tissue distribution, detected in testis and ovary. Expressed in spermatocytes, spermatids and testicular spermatozoa, but not in spermatogonia or interstitial cells. Expressed abundantly in testicular germ cells (TGCs) but mostly disappeared from epididymal spermatozoa.

It localises to the cell membrane. The protein resides in the membrane raft. Its subcellular location is the cytoplasmic vesicle. The protein localises to the secretory vesicle. It is found in the acrosome. It localises to the secreted. In terms of biological role, plays a role in fertilization by controlling binding of sperm to zona pellucida and migration of spermatozoa into the oviduct probably through molecule adhesion ADAM3. May play a role in signal transduction and promote protein tyrosine phosphorylation. The chain is Testis-expressed protein 101 from Mus musculus (Mouse).